The sequence spans 249 residues: Ubiquinone/menaquinone biosynthesis C-methyltransferase UbiE (249 aa).

Residues Thr-72, Asp-93, and Asp-121–Ala-122 each bind S-adenosyl-L-methionine.

The protein belongs to the class I-like SAM-binding methyltransferase superfamily. MenG/UbiE family.

The catalysed reaction is a 2-demethylmenaquinol + S-adenosyl-L-methionine = a menaquinol + S-adenosyl-L-homocysteine + H(+). The enzyme catalyses a 2-methoxy-6-(all-trans-polyprenyl)benzene-1,4-diol + S-adenosyl-L-methionine = a 5-methoxy-2-methyl-3-(all-trans-polyprenyl)benzene-1,4-diol + S-adenosyl-L-homocysteine + H(+). It participates in quinol/quinone metabolism; menaquinone biosynthesis; menaquinol from 1,4-dihydroxy-2-naphthoate: step 2/2. It functions in the pathway cofactor biosynthesis; ubiquinone biosynthesis. Methyltransferase required for the conversion of demethylmenaquinol (DMKH2) to menaquinol (MKH2) and the conversion of 2-polyprenyl-6-methoxy-1,4-benzoquinol (DDMQH2) to 2-polyprenyl-3-methyl-6-methoxy-1,4-benzoquinol (DMQH2). This Teredinibacter turnerae (strain ATCC 39867 / T7901) protein is Ubiquinone/menaquinone biosynthesis C-methyltransferase UbiE.